A 277-amino-acid chain; its full sequence is Large ribosomal subunit protein uL2 (277 aa).

Disordered stretches follow at residues Gln-35 to His-58 and Trp-213 to Lys-277.

This sequence belongs to the universal ribosomal protein uL2 family. In terms of assembly, part of the 50S ribosomal subunit. Forms a bridge to the 30S subunit in the 70S ribosome.

In terms of biological role, one of the primary rRNA binding proteins. Required for association of the 30S and 50S subunits to form the 70S ribosome, for tRNA binding and peptide bond formation. It has been suggested to have peptidyltransferase activity; this is somewhat controversial. Makes several contacts with the 16S rRNA in the 70S ribosome. This is Large ribosomal subunit protein uL2 from Staphylococcus carnosus (strain TM300).